Consider the following 218-residue polypeptide: 3,4-dihydroxy-2-butanone 4-phosphate synthase (218 aa).

D-ribulose 5-phosphate contacts are provided by residues 37–38, aspartate 42, 150–154, and glutamate 174; these read RE and RGGHT. Glutamate 38 serves as a coordination point for Mg(2+). A Mg(2+)-binding site is contributed by histidine 153.

It belongs to the DHBP synthase family. Homodimer. The cofactor is Mg(2+). Mn(2+) is required as a cofactor.

It catalyses the reaction D-ribulose 5-phosphate = (2S)-2-hydroxy-3-oxobutyl phosphate + formate + H(+). It functions in the pathway cofactor biosynthesis; riboflavin biosynthesis; 2-hydroxy-3-oxobutyl phosphate from D-ribulose 5-phosphate: step 1/1. Functionally, catalyzes the conversion of D-ribulose 5-phosphate to formate and 3,4-dihydroxy-2-butanone 4-phosphate. The sequence is that of 3,4-dihydroxy-2-butanone 4-phosphate synthase from Erwinia tasmaniensis (strain DSM 17950 / CFBP 7177 / CIP 109463 / NCPPB 4357 / Et1/99).